Reading from the N-terminus, the 411-residue chain is Argininosuccinate lyase (411 aa).

This sequence belongs to the lyase 1 family. Argininosuccinate lyase subfamily.

The protein localises to the cytoplasm. It carries out the reaction 2-(N(omega)-L-arginino)succinate = fumarate + L-arginine. It participates in amino-acid biosynthesis; L-arginine biosynthesis; L-arginine from L-ornithine and carbamoyl phosphate: step 3/3. In Legionella pneumophila (strain Paris), this protein is Argininosuccinate lyase.